Here is a 298-residue protein sequence, read N- to C-terminus: Ribosomal RNA small subunit methyltransferase A (298 aa).

Residues N35, L37, G62, E83, D108, and N133 each contribute to the S-adenosyl-L-methionine site.

It belongs to the class I-like SAM-binding methyltransferase superfamily. rRNA adenine N(6)-methyltransferase family. RsmA subfamily.

It is found in the cytoplasm. The enzyme catalyses adenosine(1518)/adenosine(1519) in 16S rRNA + 4 S-adenosyl-L-methionine = N(6)-dimethyladenosine(1518)/N(6)-dimethyladenosine(1519) in 16S rRNA + 4 S-adenosyl-L-homocysteine + 4 H(+). Functionally, specifically dimethylates two adjacent adenosines (A1518 and A1519) in the loop of a conserved hairpin near the 3'-end of 16S rRNA in the 30S particle. May play a critical role in biogenesis of 30S subunits. This is Ribosomal RNA small subunit methyltransferase A from Streptococcus pyogenes serotype M2 (strain MGAS10270).